The following is a 202-amino-acid chain: dITP/XTP pyrophosphatase (202 aa).

Position 7–12 (7–12 (TTNEGK)) interacts with substrate. Residues E37 and D66 each coordinate Mg(2+). The Proton acceptor role is filled by D66. Substrate is bound by residues S67, 155–158 (FGYD), K178, and 183–184 (HR).

The protein belongs to the HAM1 NTPase family. As to quaternary structure, homodimer. The cofactor is Mg(2+).

It catalyses the reaction XTP + H2O = XMP + diphosphate + H(+). The catalysed reaction is dITP + H2O = dIMP + diphosphate + H(+). The enzyme catalyses ITP + H2O = IMP + diphosphate + H(+). Functionally, pyrophosphatase that catalyzes the hydrolysis of nucleoside triphosphates to their monophosphate derivatives, with a high preference for the non-canonical purine nucleotides XTP (xanthosine triphosphate), dITP (deoxyinosine triphosphate) and ITP. Seems to function as a house-cleaning enzyme that removes non-canonical purine nucleotides from the nucleotide pool, thus preventing their incorporation into DNA/RNA and avoiding chromosomal lesions. The chain is dITP/XTP pyrophosphatase from Aquifex aeolicus (strain VF5).